Consider the following 166-residue polypeptide: Large ribosomal subunit protein uL10 (166 aa).

This sequence belongs to the universal ribosomal protein uL10 family. In terms of assembly, part of the ribosomal stalk of the 50S ribosomal subunit. The N-terminus interacts with L11 and the large rRNA to form the base of the stalk. The C-terminus forms an elongated spine to which L12 dimers bind in a sequential fashion forming a multimeric L10(L12)X complex.

Its function is as follows. Forms part of the ribosomal stalk, playing a central role in the interaction of the ribosome with GTP-bound translation factors. The protein is Large ribosomal subunit protein uL10 of Shewanella oneidensis (strain ATCC 700550 / JCM 31522 / CIP 106686 / LMG 19005 / NCIMB 14063 / MR-1).